The chain runs to 93 residues: Ferredoxin-2 (93 aa).

In terms of domain architecture, 2Fe-2S ferredoxin-type spans 2–91 (YKVTLKTPDG…DVVIETHKED (90 aa)). The [2Fe-2S] cluster site is built by Cys-37, Cys-42, Cys-45, and Cys-75.

It belongs to the 2Fe2S plant-type ferredoxin family. It depends on [2Fe-2S] cluster as a cofactor.

The protein localises to the plastid. It localises to the chloroplast. Ferredoxins are iron-sulfur proteins that transfer electrons in a wide variety of metabolic reactions. The polypeptide is Ferredoxin-2 (Equisetum arvense (Field horsetail)).